The sequence spans 561 residues: uncharacterized protein (561 aa).

A run of 2 helical transmembrane segments spans residues 29–49 (FIFN…KKII) and 80–100 (FLFH…AVVI).

The protein localises to the cell membrane. This is an uncharacterized protein from Mycoplasma pneumoniae (strain ATCC 29342 / M129 / Subtype 1) (Mycoplasmoides pneumoniae).